A 461-amino-acid polypeptide reads, in one-letter code: A-type ATP synthase subunit B (461 aa).

It belongs to the ATPase alpha/beta chains family. In terms of assembly, has multiple subunits with at least A(3), B(3), C, D, E, F, H, I and proteolipid K(x).

It is found in the cell membrane. In terms of biological role, component of the A-type ATP synthase that produces ATP from ADP in the presence of a proton gradient across the membrane. The B chain is a regulatory subunit. The polypeptide is A-type ATP synthase subunit B (Nitrosopumilus maritimus (strain SCM1)).